A 57-amino-acid polypeptide reads, in one-letter code: COP9 signalosome complex subunit 9 (57 aa).

The protein belongs to the CSN9 family. Component of the CSN complex, probably composed of cops1, cops2, cops3, cops4, cops5, cops6, cops7, cops8 and cops9.

The protein localises to the nucleus. Its subcellular location is the cytoplasm. It localises to the nucleoplasm. In terms of biological role, component of the COP9 signalosome complex (CSN), a complex involved in various cellular and developmental processes. The CSN complex is an essential regulator of the ubiquitin (Ubl) conjugation pathway by mediating the deneddylation of the cullin subunits of SCF-type E3 ligase complexes, leading to decrease the Ubl ligase activity. May play a role in cell proliferation. In Xenopus laevis (African clawed frog), this protein is COP9 signalosome complex subunit 9.